The primary structure comprises 62 residues: Putative antitoxin AF_1095 (62 aa).

It belongs to the UPF0165 family.

Its function is as follows. Possibly the antitoxin component of a type II toxin-antitoxin (TA) system. This is Putative antitoxin AF_1095 from Archaeoglobus fulgidus (strain ATCC 49558 / DSM 4304 / JCM 9628 / NBRC 100126 / VC-16).